Here is a 393-residue protein sequence, read N- to C-terminus: Asparagine--oxo-acid transaminase (393 aa).

L-asparagine is bound by residues G39, W126, and N176. N6-(pyridoxal phosphate)lysine is present on K239. R370 serves as a coordination point for L-asparagine.

This sequence belongs to the class-I pyridoxal-phosphate-dependent aminotransferase family. Pyridoxal 5'-phosphate is required as a cofactor.

It catalyses the reaction a 2-oxocarboxylate + L-asparagine = 2-oxosuccinamate + an L-alpha-amino acid. The catalysed reaction is L-asparagine + 2-oxoglutarate = 2-oxosuccinamate + L-glutamate. Functionally, catalyzes the transamination reaction between L-asparagine and 2-oxoglutarate to produce L-glutamate and 2-oxosuccinamate. Is not active with pyruvate as amine acceptor. May also use other amino acids as substrates. The sequence is that of Asparagine--oxo-acid transaminase from Streptococcus mutans serotype c (strain ATCC 700610 / UA159).